The following is a 215-amino-acid chain: Adenylate kinase (215 aa).

10–15 (GTGKGT) provides a ligand contact to ATP. The segment at 30–59 (STGHILRKISTKKTLFGEKIKNIINSGKLV) is NMP. Residues Thr31, Arg36, 57–59 (KLV), 85–88 (GFPR), and Gln92 contribute to the AMP site. The tract at residues 122-157 (TRTINPITGTIYNNVIQKNSELKNLKINTLKSRLDD) is LID. ATP-binding positions include Arg123 and 132–133 (IY). Arg154 and Arg165 together coordinate AMP. Position 198 (Asn198) interacts with ATP.

It belongs to the adenylate kinase family. In terms of assembly, monomer.

It localises to the cytoplasm. It carries out the reaction AMP + ATP = 2 ADP. It functions in the pathway purine metabolism; AMP biosynthesis via salvage pathway; AMP from ADP: step 1/1. In terms of biological role, catalyzes the reversible transfer of the terminal phosphate group between ATP and AMP. Plays an important role in cellular energy homeostasis and in adenine nucleotide metabolism. The sequence is that of Adenylate kinase from Buchnera aphidicola subsp. Baizongia pistaciae (strain Bp).